A 163-amino-acid chain; its full sequence is Phosphopantetheine adenylyltransferase (163 aa).

Position 9 (Thr9) interacts with substrate. ATP-binding positions include 9–10 and His17; that span reads TF. Residues Lys41, Thr73, and Arg87 each coordinate substrate. Residues 88-90, Glu98, and 123-129 each bind ATP; these read GLR and FSFISSS.

The protein belongs to the bacterial CoaD family. In terms of assembly, homohexamer. It depends on Mg(2+) as a cofactor.

It is found in the cytoplasm. It carries out the reaction (R)-4'-phosphopantetheine + ATP + H(+) = 3'-dephospho-CoA + diphosphate. It functions in the pathway cofactor biosynthesis; coenzyme A biosynthesis; CoA from (R)-pantothenate: step 4/5. Its function is as follows. Reversibly transfers an adenylyl group from ATP to 4'-phosphopantetheine, yielding dephospho-CoA (dPCoA) and pyrophosphate. In Desulfitobacterium hafniense (strain DSM 10664 / DCB-2), this protein is Phosphopantetheine adenylyltransferase.